We begin with the raw amino-acid sequence, 175 residues long: Small ribosomal subunit protein uS7 (175 aa).

It belongs to the universal ribosomal protein uS7 family. As to quaternary structure, part of the 30S ribosomal subunit. Contacts proteins S9 and S11.

Its function is as follows. One of the primary rRNA binding proteins, it binds directly to 16S rRNA where it nucleates assembly of the head domain of the 30S subunit. Is located at the subunit interface close to the decoding center, probably blocks exit of the E-site tRNA. The sequence is that of Small ribosomal subunit protein uS7 from Legionella pneumophila (strain Paris).